Consider the following 343-residue polypeptide: Malate dehydrogenase, peroxisomal (343 aa).

Residues 8–14 (GASGGVG) and D34 each bind NAD(+). R80 and R86 together coordinate substrate. Residues N93 and 116–118 (ISN) contribute to the NAD(+) site. Positions 118 and 152 each coordinate substrate. H187 (proton acceptor) is an active-site residue. An NAD(+)-binding site is contributed by M237.

Belongs to the LDH/MDH superfamily. MDH type 1 family. In terms of assembly, homodimer.

The protein localises to the peroxisome. It carries out the reaction (S)-malate + NAD(+) = oxaloacetate + NADH + H(+). This is Malate dehydrogenase, peroxisomal (MDH3) from Saccharomyces cerevisiae (strain ATCC 204508 / S288c) (Baker's yeast).